The primary structure comprises 1021 residues: Sodium/potassium-transporting ATPase subunit alpha-1 (1021 aa).

Positions 1–5 (MGKGG) are excised as a propeptide. Over residues 1-11 (MGKGGGRDKYE) the composition is skewed to basic and acidic residues. The disordered stretch occupies residues 1-37 (MGKGGGRDKYEPAAISEHGNKKKAKKERDMDELKKEV). The Cytoplasmic portion of the chain corresponds to 6-85 (GRDKYEPAAI…NALTPPPTTP (80 aa)). Position 9 is an N6-acetyllysine (Lys9). Tyr10 bears the Phosphotyrosine mark. Ser16 is modified (phosphoserine; by PKC). At Lys21 the chain carries N6-acetyllysine. A compositionally biased stretch (basic and acidic residues) spans 26–37 (KERDMDELKKEV). Ser38 and Ser45 each carry phosphoserine. Positions 80 to 82 (PPP) are phosphoinositide-3 kinase binding. A helical membrane pass occupies residues 86 to 106 (EWVKFCRQLFGGFSMLLWIGA). Residues 107-129 (ILCFLAYGIQAATEEEPQNDNLY) are Extracellular-facing. A helical transmembrane segment spans residues 130-150 (LGVVLSAVVIITGCFSYYQEA). At 151-286 (KSSKIMESFK…GGQTPIAAEI (136 aa)) the chain is on the cytoplasmic side. Residues 214 to 233 (SSLTGESEPQTRSPDFTNEN) are disordered. At Ser226 the chain carries Phosphoserine. Tyr258 is subject to Phosphotyrosine. A helical transmembrane segment spans residues 287–306 (EHFIHIITGVAVFLGVTFFI). The Extracellular segment spans residues 307-318 (LSLILEYTWLEA). Residues 319-336 (VIFLIGIIVANVPEGLLA) traverse the membrane as a helical segment. At 337-770 (TVTVCLTLTA…EEGRLIFDNL (434 aa)) the chain is on the cytoplasmic side. Asp374 acts as the 4-aspartylphosphate intermediate in catalysis. Phosphoserine occurs at positions 450 and 482. Lys485 contributes to the ATP binding site. At Tyr540 the chain carries Phosphotyrosine. The segment at 594-715 (RAAVPDAVGK…QGAIVAVTGD (122 aa)) is mediates interaction with SCN7A. Lys659 bears the N6-succinyllysine mark. Phosphoserine is present on Ser666. The Mg(2+) site is built by Asp715 and Asp719. A helical transmembrane segment spans residues 771–790 (KKSIAYTLTSNIPEITPFLI). The Extracellular portion of the chain corresponds to 791–800 (FIIANIPLPL). The chain crosses the membrane as a helical span at residues 801–821 (GTVTILCIDLGTDMVPAISLA). Residues 822-841 (YEQAESDIMKRQPRNPQTDK) lie on the Cytoplasmic side of the membrane. A helical membrane pass occupies residues 842 to 864 (LVNERLISMAYGQIGMIQALGGF). The Extracellular segment spans residues 865–916 (FTYFVILAENGFLPIHLLGLRVDWDDRWVNDVEDSYGQQWTYEQRKIVEFTC). Residues 917–936 (HTAFFVSIVVVQWADLVICK) traverse the membrane as a helical segment. The Cytoplasmic segment spans residues 937–949 (TRRNSVFQQGMKN). A Phosphoserine; by PKA modification is found at Ser941. The chain crosses the membrane as a helical span at residues 950–968 (KILIFGLFEETALAAFLSY). At 969-983 (CPGMGVALRMYPLKP) the chain is on the extracellular side. The chain crosses the membrane as a helical span at residues 984–1004 (TWWFCAFPYSLLIFVYDEVRK). The Cytoplasmic segment spans residues 1005 to 1021 (LIIRRRPGGWVEKETYY).

This sequence belongs to the cation transport ATPase (P-type) (TC 3.A.3) family. Type IIC subfamily. As to quaternary structure, the sodium/potassium-transporting ATPase is composed of a catalytic alpha subunit, an auxiliary non-catalytic beta subunit and an additional regulatory subunit. Interacts with regulatory subunit FXYD1. Interacts with regulatory subunit FXYD3. Interacts with SIK1. Interacts with SLC35G1 and STIM1. Interacts with CLN3; this interaction regulates the sodium/potassium-transporting ATPase complex localization at the plasma membrane. Interacts with SCN7A; activates ATP1A1 P-type sodium:potassium-exchanging transporter activity which indirectly signals to nearby neurons to regulate sodium homeostasis. Post-translationally, phosphorylation on Tyr-10 modulates pumping activity. Phosphorylation of Ser-941 by PKA modulates the response of ATP1A1 to PKC. Dephosphorylation by protein phosphatase 2A (PP2A) following increases in intracellular sodium, leading to increase catalytic activity.

The protein resides in the cell membrane. It is found in the basolateral cell membrane. Its subcellular location is the sarcolemma. It localises to the cell projection. The protein localises to the axon. The protein resides in the melanosome. It carries out the reaction K(+)(out) + Na(+)(in) + ATP + H2O = K(+)(in) + Na(+)(out) + ADP + phosphate + H(+). Functionally, this is the catalytic component of the active enzyme, which catalyzes the hydrolysis of ATP coupled with the exchange of sodium and potassium ions across the plasma membrane. This action creates the electrochemical gradient of sodium and potassium ions, providing the energy for active transport of various nutrients. Could also be part of an osmosensory signaling pathway that senses body-fluid sodium levels and controls salt intake behavior as well as voluntary water intake to regulate sodium homeostasis. The chain is Sodium/potassium-transporting ATPase subunit alpha-1 (ATP1A1) from Equus caballus (Horse).